We begin with the raw amino-acid sequence, 222 residues long: Large ribosomal subunit protein mL64 (222 aa).

2 disordered regions span residues 14-40 (LTAT…PWWP) and 188-222 (KRLK…APSS). Residues 144-213 (EKAQADKERR…AALAAAAAQD (70 aa)) adopt a coiled-coil conformation. Positions 184-200 (KKERKRLKEEKQRQKQE) match the Nuclear localization signal motif. The segment covering 188 to 201 (KRLKEEKQRQKQEA) has biased composition (basic and acidic residues). The segment covering 202–216 (RAAALAAAAAQDPAA) has biased composition (low complexity).

This sequence belongs to the mitochondrion-specific ribosomal protein mL64 family. In terms of assembly, component of the mitochondrial ribosome large subunit (39S) which comprises a 16S rRNA and about 50 distinct proteins. Interacts with GADD45A, GADD45B and GADD45G. Interacts with NR4A1 via the NR4A1 AB domain. Interacts with ATAD3A and ATAD3B.

The protein localises to the mitochondrion. Its subcellular location is the nucleus. Its function is as follows. Acts as a negative regulator of G1 to S cell cycle phase progression by inhibiting cyclin-dependent kinases. Inhibitory effects are additive with GADD45 proteins but also occur in the absence of GADD45 proteins. Acts as a repressor of the orphan nuclear receptor NR4A1 by inhibiting AB domain-mediated transcriptional activity. May be involved in the hormone-mediated regulation of NR4A1 transcriptional activity. May play a role in mitochondrial protein synthesis. In Chlorocebus aethiops (Green monkey), this protein is Large ribosomal subunit protein mL64 (GADD45GIP1).